The sequence spans 836 residues: Conserved oligomeric Golgi complex subunit 7 (836 aa).

Coiled-coil stretches lie at residues 29–49 (QDSL…ASEE) and 107–127 (LARV…LQDA). The disordered stretch occupies residues 246–265 (KLANERSESQRLSSGDEFQS).

The protein belongs to the COG7 family. In terms of assembly, component of the conserved oligomeric Golgi complex which is composed of eight different subunits and is required for normal Golgi morphology and localization. Interacts with COG5 and COG6.

The protein resides in the golgi apparatus membrane. Required for normal Golgi function. Necessary for embryo development and pigmentation, especially for the expansion of cells and organs, and for the formation of the organized shoot apical meristem (SAM). Probably involved in the generation of the extra-cellular matrix. The protein is Conserved oligomeric Golgi complex subunit 7 of Arabidopsis thaliana (Mouse-ear cress).